The following is a 247-amino-acid chain: DNA polymerase sliding clamp (247 aa).

Belongs to the PCNA family. Homotrimer. The subunits circularize to form a toroid; DNA passes through its center. Replication factor C (RFC) is required to load the toroid on the DNA.

Functionally, sliding clamp subunit that acts as a moving platform for DNA processing. Responsible for tethering the catalytic subunit of DNA polymerase and other proteins to DNA during high-speed replication. The protein is DNA polymerase sliding clamp of Methanosphaerula palustris (strain ATCC BAA-1556 / DSM 19958 / E1-9c).